The primary structure comprises 140 residues: Profilin-2 (140 aa).

The residue at position 2 (Ala-2) is an N-acetylalanine.

It belongs to the profilin family. In terms of assembly, occurs in many kinds of cells as a complex with monomeric actin in a 1:1 ratio. Interacts with PFN2. Interacts with ACTMAP (via N-terminus); the interaction may facilitate efficient cleavage of the acetylated N-terminus of immature actin by ACTMAP.

Its subcellular location is the cytoplasm. The protein localises to the cytoskeleton. Its function is as follows. Binds to actin and affects the structure of the cytoskeleton. At high concentrations, profilin prevents the polymerization of actin, whereas it enhances it at low concentrations. By binding to PIP2, it inhibits the formation of IP3 and DG. The chain is Profilin-2 (PFN2) from Bos taurus (Bovine).